Consider the following 217-residue polypeptide: MKKPYRKISDYAIVGGLSALVMVSIVGCKSNADDKQKEQSSLSQSVQKGAFVILEEQKDKSYKVVEEYPSSRTHIIVRDLQGNERVLSNEEIQKLIKEEEAKIDNGTSKLIQPNTNNGGSNEGSGFGLGSAILGSAAGAILGSYIGNKLFNNPNYQQNAQRTYKSPQAYQRSQNSFSKSAPSASSMGTASKGQSGFFGSSRPTSSPAISSGTRGFNS.

The N-terminal stretch at 1 to 27 (MKKPYRKISDYAIVGGLSALVMVSIVG) is a signal peptide. Residue Cys-28 is the site of N-palmitoyl cysteine attachment. A lipid anchor (S-diacylglycerol cysteine) is attached at Cys-28. Positions 160-171 (QRTYKSPQAYQR) are enriched in polar residues. Residues 160 to 217 (QRTYKSPQAYQRSQNSFSKSAPSASSMGTASKGQSGFFGSSRPTSSPAISSGTRGFNS) form a disordered region. Residues 172–185 (SQNSFSKSAPSASS) are compositionally biased toward low complexity. The segment covering 186–197 (MGTASKGQSGFF) has biased composition (polar residues). Residues 199–210 (SSRPTSSPAISS) are compositionally biased toward low complexity.

This sequence belongs to the UPF0323 family.

The protein resides in the cell membrane. The sequence is that of UPF0323 lipoprotein HPP12_0232 from Helicobacter pylori (strain P12).